We begin with the raw amino-acid sequence, 131 residues long: Sec-independent protein translocase protein TatB (131 aa).

The chain crosses the membrane as a helical span at residues 2-22; it reads FDGIGFMELLLIGILGLVVLG. Polar residues-rich tracts occupy residues 68–83 and 116–131; these read ESQG…QDSI and AEKS…KPNG. The interval 68–131 is disordered; the sequence is ESQGLKNLSP…TGANSDKPNG (64 aa).

Belongs to the TatB family. In terms of assembly, the Tat system comprises two distinct complexes: a TatABC complex, containing multiple copies of TatA, TatB and TatC subunits, and a separate TatA complex, containing only TatA subunits. Substrates initially bind to the TatABC complex, which probably triggers association of the separate TatA complex to form the active translocon.

The protein resides in the cell inner membrane. Functionally, part of the twin-arginine translocation (Tat) system that transports large folded proteins containing a characteristic twin-arginine motif in their signal peptide across membranes. Together with TatC, TatB is part of a receptor directly interacting with Tat signal peptides. TatB may form an oligomeric binding site that transiently accommodates folded Tat precursor proteins before their translocation. The polypeptide is Sec-independent protein translocase protein TatB (Shewanella pealeana (strain ATCC 700345 / ANG-SQ1)).